A 250-amino-acid chain; its full sequence is DNA repair protein RecO (250 aa).

It belongs to the RecO family.

In terms of biological role, involved in DNA repair and RecF pathway recombination. This Granulibacter bethesdensis (strain ATCC BAA-1260 / CGDNIH1) protein is DNA repair protein RecO.